A 272-amino-acid chain; its full sequence is Shikimate dehydrogenase (NADP(+)) (272 aa).

Residues 14 to 16 (SKS) and Thr-61 each bind shikimate. Lys-65 serves as the catalytic Proton acceptor. Glu-77 serves as a coordination point for NADP(+). Shikimate contacts are provided by Asn-86 and Asp-102. NADP(+) is bound by residues 126–130 (GAGGA), 149–154 (NRTYSR), and Met-213. Residue Tyr-215 coordinates shikimate. Gly-237 lines the NADP(+) pocket.

Belongs to the shikimate dehydrogenase family. As to quaternary structure, homodimer.

It catalyses the reaction shikimate + NADP(+) = 3-dehydroshikimate + NADPH + H(+). Its pathway is metabolic intermediate biosynthesis; chorismate biosynthesis; chorismate from D-erythrose 4-phosphate and phosphoenolpyruvate: step 4/7. Involved in the biosynthesis of the chorismate, which leads to the biosynthesis of aromatic amino acids. Catalyzes the reversible NADPH linked reduction of 3-dehydroshikimate (DHSA) to yield shikimate (SA). The sequence is that of Shikimate dehydrogenase (NADP(+)) from Enterobacter sp. (strain 638).